Here is a 325-residue protein sequence, read N- to C-terminus: Brain mitochondrial carrier protein 1 (325 aa).

6 consecutive transmembrane segments (helical) span residues 38 to 54 (GLNW…SIVA), 112 to 128 (LRQA…YQSL), 141 to 161 (LLIN…IANP), 199 to 215 (GVVP…GVEL), 240 to 256 (VSSF…SNPV), and 298 to 315 (GFWP…IFFI). Solcar repeat units lie at residues 42 to 131 (KPFV…LKRL), 139 to 224 (ETLL…TKKH), and 233 to 323 (DTIL…LKRL).

It belongs to the mitochondrial carrier (TC 2.A.29) family. As to quaternary structure, homotetramer. As to expression, mainly expressed in brain. Some expression in testis and pituitary.

It is found in the mitochondrion inner membrane. The enzyme catalyses sulfite(in) + sulfate(out) = sulfite(out) + sulfate(in). It catalyses the reaction thiosulfate(in) + sulfate(out) = thiosulfate(out) + sulfate(in). It carries out the reaction sulfate(out) + phosphate(in) = sulfate(in) + phosphate(out). The catalysed reaction is oxalate(in) + sulfate(out) = oxalate(out) + sulfate(in). The enzyme catalyses malonate(in) + sulfate(out) = malonate(out) + sulfate(in). It catalyses the reaction maleate(in) + sulfate(out) = maleate(out) + sulfate(in). It carries out the reaction (S)-malate(in) + sulfate(out) = (S)-malate(out) + sulfate(in). The catalysed reaction is (3S)-citramalate(in) + sulfate(out) = (3S)-citramalate(out) + sulfate(in). The enzyme catalyses (3R)-citramalate(in) + sulfate(out) = (3R)-citramalate(out) + sulfate(in). It catalyses the reaction sulfate(out) + succinate(in) = sulfate(in) + succinate(out). It carries out the reaction (S,S)-tartrate(in) + sulfate(out) = (S,S)-tartrate(out) + sulfate(in). The catalysed reaction is (2R,3R)-tartrate(in) + sulfate(out) = (2R,3R)-tartrate(out) + sulfate(in). The enzyme catalyses D-aspartate(in) + sulfate(out) = D-aspartate(out) + sulfate(in). It catalyses the reaction L-aspartate(in) + sulfate(out) = L-aspartate(out) + sulfate(in). It carries out the reaction sulfate(in) = sulfate(out). The catalysed reaction is phosphate(in) = phosphate(out). The enzyme catalyses (S)-malate(out) = (S)-malate(in). It catalyses the reaction citrate(in) = citrate(out). It carries out the reaction L-aspartate(out) = L-aspartate(in). The catalysed reaction is L-glutamate(out) = L-glutamate(in). The enzyme catalyses H(+)(in) = H(+)(out). It catalyses the reaction chloride(in) = chloride(out). Increased activity at pH lower than 8.0. sulfate/sulfate exchange activity is inhibited strongly by pyridoxal 5'-phosphate, bathophenanthroline and the organic mercurials mersalyl, p-chloromercuribenzoate and HgCl2. Proton conductance is activated by cardiolipin and long-chain free fatty acids and inhibited by purine nucleotides ATP and ADP. Chloride ion transporter activity is inhibited by long-chain free fatty acids. Transports inorganic anions (sulfate, sulfite, thiosulfate and phosphate) and, to a lesser extent, a variety of dicarboxylates (e.g. malonate, malate and citramalate) and, even more so, aspartate and glutamate and tricarboxylates. May catalyze the export of sulfite and thiosulfate (the hydrogen sulfide degradation products) from the mitochondria, thereby modulating the level of the hydrogen sulfide. Also can mediate a very low unidirectional transport of anions including sulfate, phosphate, (S)-malate, citrate, L-aspartate and L-glutamate. Maintains oxidative balance (through uncoupling activities) and ATP production (by modifying mitochondrial membrane potential). Is able to transport protons across lipid membranes. Also exhibits transmembrane chloride transport activity to a lesser extent. May modify mitochondrial respiratory efficiency and mitochondrial oxidant production. The protein is Brain mitochondrial carrier protein 1 of Homo sapiens (Human).